A 171-amino-acid chain; its full sequence is uncharacterized protein (171 aa).

The HTH gntR-type domain maps to 30-97 (AGRVSAAYHA…PKKGIIICAL (68 aa)). Residues 57-76 (EIEIARQLGMSRTPVHEAMA) constitute a DNA-binding region (H-T-H motif).

This is an uncharacterized protein from Agrobacterium vitis (Rhizobium vitis).